The sequence spans 136 residues: Small ribosomal subunit protein uS8 (136 aa).

This sequence belongs to the universal ribosomal protein uS8 family. In terms of assembly, part of the 30S ribosomal subunit. Contacts proteins S5 and S12.

In terms of biological role, one of the primary rRNA binding proteins, it binds directly to 16S rRNA central domain where it helps coordinate assembly of the platform of the 30S subunit. The protein is Small ribosomal subunit protein uS8 of Synechococcus sp. (strain JA-2-3B'a(2-13)) (Cyanobacteria bacterium Yellowstone B-Prime).